The sequence spans 605 residues: F-box/WD repeat-containing protein 1A (605 aa).

A homodimerization domain D region spans residues 128–177; it reads ASYEKEKELCVKYFEQWSESDQVEFVEHLISQMCHYQHGHINSYLKPMLQ. Residues 190–228 form the F-box domain; it reads DHIAENILSYLDAKSLCAAELVCKEWYRVTSDGMLWKKL. The required for down-regulation of SNAI1 stretch occupies residues 190–228; it reads DHIAENILSYLDAKSLCAAELVCKEWYRVTSDGMLWKKL. 7 WD repeats span residues 301-338, 341-378, 381-418, 424-461, 464-503, 505-541, and 553-590; these read ETSK…CKRI, GHTG…MLNT, HHCE…DITL, GHRA…FVRT, GHKR…RVLE, HEEL…DPRA, and EHSG…AAQA.

Homodimer. Self-associates. Component of the SCF(BTRC) complex formed of CUL1, SKP1, RBX1 and a BTRC dimer. Direct interaction with SKP1 occurs via the F-box domain. Interacts with phosphorylated ubiquitination substrates SMAD3 and SMAD4. Interacts with phosphorylated ubiquitination substrates CTNNB1, NFKBIA, NFKBIB, NFKBIE, NFKB1/nuclear factor NF-kappa-B p105 subunit, ATF4, CDC25A, DLG1, FBXO5 and SNAI1; the interaction requires the phosphorylation of the 2 serine residues in the substrate destruction motif D-S-G-X(2,3,4)-S. Binds UBQLN1. Interacts with CDC34 and UBE2R2. Interacts with FBXW11. Interacts with CUL4A and DDB1. Part of a SCF(BTRC)-like complex lacking CUL1, which is associated with phosphorylated NKBIA and RELA; RELA interacts directly with NFKBIA. Interacts with the phosphorylated form of GLI3. Interacts with CLU. Interacts with PER1 (phosphorylated), PER2 (phosphorylated) and PER3. Interacts with phosphorylated ubiquitination substrate CEP68. Interacts with ZC3H12A; this interaction occurs when ZC3H12A is phosphorylated in a IKBKB/IKKB-dependent manner. Interacts with HSF1; this interaction occurs during mitosis and induces HSF1 ubiquitin-dependent degradation, a process inhibited by CDC20. Interacts with NFE2L1. Interacts with INAVA. Interacts with IL10RA; this interaction leads to IL10RA ubiquitination and subsequent degradation. Interacts with REST. Interacts with KLF4; this interaction leads to KLF4 ubiquitination and subsequent degradation. Interacts with UBR2, as part of a SCF(BTRC) complex; the interaction mediates 'Lys-48'-linked ubiquitination of UBR2 and is regulated by DUSP22 in the T-cell receptor signaling pathway. As to quaternary structure, (Microbial infection) Interacts with vaccinia virus A49; this interaction inhibits NF-kappa-B activation. In terms of assembly, (Microbial infection) Interacts with HIV-1 Vpu. Ubiquitinated. Deubiquitinated by OTUD5, promoting its stability. In terms of tissue distribution, expressed in epididymis (at protein level).

It is found in the cytoplasm. It localises to the nucleus. It participates in protein modification; protein ubiquitination. In terms of biological role, substrate recognition component of a SCF (SKP1-CUL1-F-box protein) E3 ubiquitin-protein ligase complex which mediates the ubiquitination and subsequent proteasomal degradation of target proteins. Recognizes and binds to phosphorylated target proteins. SCF(BTRC) mediates the ubiquitination of CTNNB1 and participates in Wnt signaling. SCF(BTRC) mediates the ubiquitination of phosphorylated NFKB1, ATF4, CDC25A, DLG1, FBXO5, PER1, SMAD3, SMAD4, SNAI1 and probably NFKB2. SCF(BTRC) mediates the ubiquitination of NFKBIA, NFKBIB and NFKBIE; the degradation frees the associated NFKB1 to translocate into the nucleus and to activate transcription. Ubiquitination of NFKBIA occurs at 'Lys-21' and 'Lys-22'. The SCF(FBXW11) complex also regulates NF-kappa-B by mediating ubiquitination of phosphorylated NFKB1: specifically ubiquitinates the p105 form of NFKB1, leading to its degradation. SCF(BTRC) mediates the ubiquitination of CEP68; this is required for centriole separation during mitosis. SCF(BTRC) mediates the ubiquitination and subsequent degradation of nuclear NFE2L1. Has an essential role in the control of the clock-dependent transcription via degradation of phosphorylated PER1 and PER2. May be involved in ubiquitination and subsequent proteasomal degradation through a DBB1-CUL4 E3 ubiquitin-protein ligase. Required for activation of NFKB-mediated transcription by IL1B, MAP3K14, MAP3K1, IKBKB and TNF. Required for proteolytic processing of GLI3. Mediates ubiquitination of REST, thereby leading to its proteasomal degradation. SCF(BTRC) mediates the ubiquitination and subsequent proteasomal degradation of KLF4; thereby negatively regulating cell pluripotency maintenance and embryogenesis. SCF(BTRC) acts as a regulator of mTORC1 signaling pathway by catalyzing ubiquitination and subsequent proteasomal degradation of phosphorylated DEPTOR, TFE3 and MITF. SCF(BTRC) directs 'Lys-48'-linked ubiquitination of UBR2 in the T-cell receptor signaling pathway. The sequence is that of F-box/WD repeat-containing protein 1A (BTRC) from Homo sapiens (Human).